A 140-amino-acid polypeptide reads, in one-letter code: Large ribosomal subunit protein uL11 (140 aa).

The protein belongs to the universal ribosomal protein uL11 family. In terms of assembly, part of the ribosomal stalk of the 50S ribosomal subunit. Interacts with L10 and the large rRNA to form the base of the stalk. L10 forms an elongated spine to which L12 dimers bind in a sequential fashion forming a multimeric L10(L12)X complex. In terms of processing, one or more lysine residues are methylated.

In terms of biological role, forms part of the ribosomal stalk which helps the ribosome interact with GTP-bound translation factors. This Syntrophotalea carbinolica (strain DSM 2380 / NBRC 103641 / GraBd1) (Pelobacter carbinolicus) protein is Large ribosomal subunit protein uL11.